Reading from the N-terminus, the 149-residue chain is Large ribosomal subunit protein eL19 (149 aa).

Residues 55–69 show a composition bias toward basic and acidic residues; the sequence is KGISSARKKEVQEQK. A disordered region spans residues 55 to 93; that stretch reads KGISSARKKEVQEQKRKGKRKGPGSRRGAKGARTPKKEK. Residues 70-88 are compositionally biased toward basic residues; sequence RKGKRKGPGSRRGAKGART.

The protein belongs to the eukaryotic ribosomal protein eL19 family. As to quaternary structure, part of the 50S ribosomal subunit.

Binds to the 23S rRNA. This Methanococcus vannielii protein is Large ribosomal subunit protein eL19.